The following is a 209-amino-acid chain: Thymidine kinase (209 aa).

Residues 16–23 (GPMFAGKT) and 90–93 (DESQ) contribute to the ATP site. Catalysis depends on Glu91, which acts as the Proton acceptor.

This sequence belongs to the thymidine kinase family. As to quaternary structure, homotetramer.

Its subcellular location is the cytoplasm. It catalyses the reaction thymidine + ATP = dTMP + ADP + H(+). This chain is Thymidine kinase, found in Aster yellows witches'-broom phytoplasma (strain AYWB).